Here is an 819-residue protein sequence, read N- to C-terminus: Aminopeptidase O (819 aa).

A Zn(2+)-binding site is contributed by H479. E480 (proton acceptor) is an active-site residue. Zn(2+) is bound by residues H483 and E502. The short motif at 689-699 is the Nucleolar localization signal element; that stretch reads RRPRKRKRREK.

Belongs to the peptidase M1 family. Requires Zn(2+) as cofactor.

The protein resides in the nucleus. It is found in the nucleolus. Its subcellular location is the cytoplasm. Its function is as follows. Aminopeptidase which catalyzes the hydrolysis of amino acid residues from the N-terminus of peptide or protein substrates. This chain is Aminopeptidase O, found in Homo sapiens (Human).